Here is a 478-residue protein sequence, read N- to C-terminus: Zinc metalloproteinase/disintegrin VMP-II (478 aa).

The first 20 residues, methionine 1–serine 20, serve as a signal peptide directing secretion. The propeptide occupies isoleucine 21 to glutamate 190. The 197-residue stretch at arginine 197–proline 393 folds into the Peptidase M12B domain. Positions 200 and 284 each coordinate Ca(2+). 3 disulfide bridges follow: cysteine 308–cysteine 388, cysteine 348–cysteine 372, and cysteine 350–cysteine 355. Residue histidine 333 participates in Zn(2+) binding. The active site involves glutamate 334. Positions 337 and 343 each coordinate Zn(2+). Ca(2+) is bound by residues cysteine 388 and asparagine 391. A propeptide spanning residues leucine 394–leucine 405 is cleaved from the precursor. Residues glycine 414–alanine 478 enclose the Disintegrin domain. Cystine bridges form between cysteine 420–cysteine 443, cysteine 434–cysteine 440, cysteine 439–cysteine 464, and cysteine 452–cysteine 471. The short motif at arginine 456–aspartate 458 is the Cell attachment site element.

This sequence belongs to the venom metalloproteinase (M12B) family. P-II subfamily. P-IIe sub-subfamily. As to quaternary structure, heterodimer; disulfide-linked (disintegrin). Zn(2+) is required as a cofactor. Expressed by the venom gland.

Its subcellular location is the secreted. Impairs hemostasis in the envenomed animal. Its function is as follows. This recombinant protein inhibits ADP-induced platelet aggregation in whole human blood and this effect is concentration-dependent with an IC(50) of 34 nM. In Crotalus viridis viridis (Prairie rattlesnake), this protein is Zinc metalloproteinase/disintegrin VMP-II.